The primary structure comprises 252 residues: Zinc finger protein 511 (252 aa).

C2H2-type zinc fingers lie at residues 80–105 (FACQVAGCCQVFDALDDYEHHYHTLH), 107–130 (NVCSFCKRAFPSGHLLDAHILEWH), and 144–169 (YQCLVEGCTEKFKTSRDRKDHMVRMH). Positions 177–221 (FDKPKKSRSPASAEAPGDSGERSEGEAMEICSEPVAASPAPAGER) are disordered. Residue R240 is modified to Omega-N-methylarginine.

Belongs to the krueppel C2H2-type zinc-finger protein family.

The protein localises to the nucleus. May be involved in transcriptional regulation. The polypeptide is Zinc finger protein 511 (Homo sapiens (Human)).